A 798-amino-acid chain; its full sequence is MNKLKFLIILFITFLFNLKYINSLKQCKISVLLSGDWSDMGYNYQMNNARIKAESALNLEMSLCYKNLEVSIDLAKQAIEDSIKKGANFIVISSSVHTSIGYEYARLHRDKDIYWLIRGRGRPVPDDLPKVAVINFNTHLLHYTLGLVSGYLTTSGTVGFISPGPQILALANSNSFYLGALASRKNVTFLNAYTGSWYNPEVAYKASQMLISNGADFIGMSQDDMSVQKALMDSGKMALGITGFSNRLIWGSDIALSYITDWSDVFIKYAGHILNDTWPEYTDYYTTLAEGGSLLFDTFSYRVPSEVQKLVSLEIEKLKNSSYQPFRCNPMYSQINLNFDSNGCANDMEFKNTKLLLKGTDISKTINLGLYTIPIEFVDYSNSMKLGLTIVSGFCILFCIISMVLVIMFRHAKIIKSASPIFCLLILFGCIIIFSGCIIFSLSPTDGICGARVWLLSIGYTIFLGSLLVKNWRIWLLFDNPKLKKRSITNWKLYPFVAGILAADVLILALWQGLGDIRSESRIGIDSLTKYQYANVCSSNDQGSVALYILLVFHGIKLLAACFISFKIKAVDIEEFNESKPIASSIYIITFCLFIVIPLMVSPQSVASQVITIVVCAIVTTLISISLLFGSKFYMMATQGLALNQTFATNTKSSSFSLSLEKQKSKSNGLEFEDSDESEEKLPQIKNYSNSEIPNLQHNHSRLAHFSSDSCTSAEQDSKLDLENQNDENEIENNQNNQNNIVEDCQKVEKLEKDENLEKDENLEKDENLEKDNENQSIIQKKRLSKNFNQSEIDPDDV.

The N-terminal stretch at 1–23 is a signal peptide; that stretch reads MNKLKFLIILFITFLFNLKYINS. Over 24–388 the chain is Extracellular; it reads LKQCKISVLL…DYSNSMKLGL (365 aa). N-linked (GlcNAc...) asparagine glycosylation is found at Asn186, Asn275, and Asn320. A helical membrane pass occupies residues 389-409; sequence TIVSGFCILFCIISMVLVIMF. Topologically, residues 410–419 are cytoplasmic; it reads RHAKIIKSAS. The chain crosses the membrane as a helical span at residues 420-440; the sequence is PIFCLLILFGCIIIFSGCIIF. Over 441–447 the chain is Extracellular; sequence SLSPTDG. A helical membrane pass occupies residues 448 to 468; it reads ICGARVWLLSIGYTIFLGSLL. The Cytoplasmic segment spans residues 469–494; it reads VKNWRIWLLFDNPKLKKRSITNWKLY. Residues 495 to 515 form a helical membrane-spanning segment; the sequence is PFVAGILAADVLILALWQGLG. Residues 516 to 545 lie on the Extracellular side of the membrane; that stretch reads DIRSESRIGIDSLTKYQYANVCSSNDQGSV. The helical transmembrane segment at 546–566 threads the bilayer; sequence ALYILLVFHGIKLLAACFISF. Topologically, residues 567–580 are cytoplasmic; the sequence is KIKAVDIEEFNESK. A helical transmembrane segment spans residues 581–601; it reads PIASSIYIITFCLFIVIPLMV. The Extracellular portion of the chain corresponds to 602-609; it reads SPQSVASQ. Residues 610–630 form a helical membrane-spanning segment; it reads VITIVVCAIVTTLISISLLFG. The Cytoplasmic segment spans residues 631–798; sequence SKFYMMATQG…NQSEIDPDDV (168 aa). Residues 714-771 are a coiled coil; it reads AEQDSKLDLENQNDENEIENNQNNQNNIVEDCQKVEKLEKDENLEKDENLEKDENLEK. A compositionally biased stretch (basic and acidic residues) spans 752–774; it reads EKDENLEKDENLEKDENLEKDNE. A disordered region spans residues 752 to 798; sequence EKDENLEKDENLEKDENLEKDNENQSIIQKKRLSKNFNQSEIDPDDV.

The protein in the N-terminal section; belongs to the BMP lipoprotein family. This sequence in the C-terminal section; belongs to the G-protein coupled receptor 3 family. GABA-B receptor subfamily.

It localises to the membrane. The protein localises to the cytoplasm. It is found in the cell cortex. The protein resides in the perinuclear region. Its function is as follows. May play an important role in the terminal differentiation. The chain is Metabotropic glutamate receptor-like protein A (grlA) from Dictyostelium discoideum (Social amoeba).